We begin with the raw amino-acid sequence, 468 residues long: Peroxisome proliferator-activated receptor alpha (468 aa).

A DNA-binding region (nuclear receptor) is located at residues 99–173 (NIECRICGDK…VGMSHNAIRF (75 aa)). 2 consecutive NR C4-type zinc fingers follow at residues 102–122 (CRIC…CEGC) and 139–161 (CDRS…FHKC). The NR LBD domain maps to 239–466 (FVIHDMETLC…HPLLQEIYRD (228 aa)). A required for heterodimerization with RXRA region spans residues 304–433 (DQVTLLKYGV…PKLLQKMVDL (130 aa)).

The protein belongs to the nuclear hormone receptor family. NR1 subfamily. In terms of assembly, heterodimer; with RXRA. This heterodimerization is required for DNA binding and transactivation activity. Interacts with NCOA3 coactivator. Interacts with CITED2; the interaction stimulates its transcriptional activity. Also interacts with PPARBP in vitro. Interacts with AKAP13, LPIN1, PRDM16 and coactivator NCOA6. Interacts with ASXL1 and ASXL2. Interacts with PER2. Interacts with SIRT1; the interaction seems to be modulated by NAD(+) levels. Interacts with CRY1 and CRY2. In hepatocytes, interacts with PAQR3 and HUWE1; the interactions promote PPARA poylubiquitination and HUWE1-mediated degradation. Post-translationally, phosphorylated. In terms of processing, ubiquitinated by E3 ubiquitin-protein ligase HUWE1; leading to proteasomal degradation. As to expression, expressed predominantly in liver and kidney.

It localises to the nucleus. Ligand-activated transcription factor. Key regulator of lipid metabolism. Activated by the endogenous ligand 1-palmitoyl-2-oleoyl-sn-glycerol-3-phosphocholine (16:0/18:1-GPC). Activated by oleylethanolamide, a naturally occurring lipid that regulates satiety. Receptor for peroxisome proliferators such as hypolipidemic drugs and fatty acids. Regulates the peroxisomal beta-oxidation pathway of fatty acids. Functions as a transcription activator for the ACOX1 and P450 genes. Transactivation activity requires heterodimerization with RXRA and is antagonized by NR2C2. May be required for the propagation of clock information to metabolic pathways regulated by PER2. This Rattus norvegicus (Rat) protein is Peroxisome proliferator-activated receptor alpha (Ppara).